Consider the following 273-residue polypeptide: DnaJ homolog subfamily C member 27 (273 aa).

Positions 1–18 (MESNVPKRKEPLKSLRIK) are required for interaction with MAPK1. GTP is bound by residues 23-30 (GNAEVGKS), 71-75 (DMAGH), and 134-137 (NKID). One can recognise a J domain in the interval 217–273 (DSWEMLGVRPGASREEVNKAYRKLAVLLHPDKCVAPGSEDAFKAVVNARTALLKNIK).

It belongs to the small GTPase superfamily. Rab family. As to quaternary structure, interacts directly with MAPK1 (wild-type and kinase-deficient forms). Interacts directly (in GTP-bound form) with MAP2K1 (wild-type and kinase-deficient forms).

It localises to the nucleus. Functionally, GTPase which can activate the MEK/ERK pathway and induce cell transformation when overexpressed. May act as a nuclear scaffold for MAPK1, probably by association with MAPK1 nuclear export signal leading to enhanced ERK1/ERK2 signaling. The polypeptide is DnaJ homolog subfamily C member 27 (Dnajc27) (Rattus norvegicus (Rat)).